A 308-amino-acid polypeptide reads, in one-letter code: MGNTLGLAPMGTLPRWSHRREEPLPNPGSFDELHRLCKDVFPAQMEGVKLVVNKVLSSHFQVAHTVHMSALGLPGYHLHTAYAGDWQLSPTEVFPTVVGDMDSSGSLNAQVLLLLAERLRAKAVFQTQQAKFLTWQFDGEYRGDDYTATLTLGNPDLIGESVIMVAHFLQSITHRLVLGGELVYHRRPGEEGAILTLAGKYSALHWVATLNVGSGGAHASYYHKANEQVQVGVEFEANTRLQDTTFSFGYHLTLPQADMVFRGLVDSNWCVGAVLEKKMRPLPVTLALGAFLNHWRNRFHCGFSITVG.

Positions 281-308 (PLPVTLALGAFLNHWRNRFHCGFSITVG) are required for mitochondrial targeting.

This sequence belongs to the Tom40 family. In terms of assembly, forms part of the preprotein translocase of the outer mitochondrial membrane (TOM complex) containing TOMM22, TOMM40, TOMM40L and TOMM70. Interacts with mitochondrial targeting sequences. As to expression, widely expressed. Higher levels in heart, brain and liver, very low level in testis.

The protein localises to the mitochondrion outer membrane. Functionally, potential channel-forming protein implicated in import of protein precursors into mitochondria. This Rattus norvegicus (Rat) protein is Mitochondrial import receptor subunit TOM40B.